A 163-amino-acid polypeptide reads, in one-letter code: NADH-quinone oxidoreductase subunit I (163 aa).

2 4Fe-4S ferredoxin-type domains span residues 54–84 (LRRY…IESD) and 94–123 (TRYD…ETHI). Residues C64, C67, C70, C74, C103, C106, C109, and C113 each coordinate [4Fe-4S] cluster.

This sequence belongs to the complex I 23 kDa subunit family. In terms of assembly, NDH-1 is composed of 14 different subunits. Subunits NuoA, H, J, K, L, M, N constitute the membrane sector of the complex. The cofactor is [4Fe-4S] cluster.

It is found in the cell inner membrane. The enzyme catalyses a quinone + NADH + 5 H(+)(in) = a quinol + NAD(+) + 4 H(+)(out). In terms of biological role, NDH-1 shuttles electrons from NADH, via FMN and iron-sulfur (Fe-S) centers, to quinones in the respiratory chain. The immediate electron acceptor for the enzyme in this species is believed to be ubiquinone. Couples the redox reaction to proton translocation (for every two electrons transferred, four hydrogen ions are translocated across the cytoplasmic membrane), and thus conserves the redox energy in a proton gradient. This chain is NADH-quinone oxidoreductase subunit I, found in Ralstonia nicotianae (strain ATCC BAA-1114 / GMI1000) (Ralstonia solanacearum).